We begin with the raw amino-acid sequence, 227 residues long: Lipoprotein-releasing system ATP-binding protein LolD (227 aa).

Positions 7-227 (LSCRDLGKSY…HLQEGHLVAI (221 aa)) constitute an ABC transporter domain. 43 to 50 (GTSGSGKS) is an ATP binding site.

This sequence belongs to the ABC transporter superfamily. Lipoprotein translocase (TC 3.A.1.125) family. In terms of assembly, the complex is composed of two ATP-binding proteins (LolD) and two transmembrane proteins (LolC and LolE).

The protein localises to the cell inner membrane. Part of the ABC transporter complex LolCDE involved in the translocation of mature outer membrane-directed lipoproteins, from the inner membrane to the periplasmic chaperone, LolA. Responsible for the formation of the LolA-lipoprotein complex in an ATP-dependent manner. This chain is Lipoprotein-releasing system ATP-binding protein LolD, found in Pseudomonas fluorescens (strain ATCC BAA-477 / NRRL B-23932 / Pf-5).